The primary structure comprises 187 residues: Isopentenyl-diphosphate Delta-isomerase (187 aa).

Positions 36, 43, and 80 each coordinate Mn(2+). A Nudix hydrolase domain is found at 41–178 (VRHRAFTALL…RQLRLCPWFE (138 aa)). Position 98 (Glu98) interacts with Mg(2+). Mn(2+)-binding residues include Glu127 and Glu129. The active site involves Glu129.

It belongs to the IPP isomerase type 1 family. Mg(2+) serves as cofactor. Mn(2+) is required as a cofactor.

It localises to the cytoplasm. The catalysed reaction is isopentenyl diphosphate = dimethylallyl diphosphate. The protein operates within isoprenoid biosynthesis; dimethylallyl diphosphate biosynthesis; dimethylallyl diphosphate from isopentenyl diphosphate: step 1/1. In terms of biological role, catalyzes the 1,3-allylic rearrangement of the homoallylic substrate isopentenyl (IPP) to its highly electrophilic allylic isomer, dimethylallyl diphosphate (DMAPP). This is Isopentenyl-diphosphate Delta-isomerase from Haloarcula marismortui (strain ATCC 43049 / DSM 3752 / JCM 8966 / VKM B-1809) (Halobacterium marismortui).